The sequence spans 160 residues: 2-amino-4-hydroxy-6-hydroxymethyldihydropteridine pyrophosphokinase (160 aa).

Belongs to the HPPK family.

It catalyses the reaction 6-hydroxymethyl-7,8-dihydropterin + ATP = (7,8-dihydropterin-6-yl)methyl diphosphate + AMP + H(+). It functions in the pathway cofactor biosynthesis; tetrahydrofolate biosynthesis; 2-amino-4-hydroxy-6-hydroxymethyl-7,8-dihydropteridine diphosphate from 7,8-dihydroneopterin triphosphate: step 4/4. Functionally, catalyzes the transfer of pyrophosphate from adenosine triphosphate (ATP) to 6-hydroxymethyl-7,8-dihydropterin, an enzymatic step in folate biosynthesis pathway. This Aquifex aeolicus (strain VF5) protein is 2-amino-4-hydroxy-6-hydroxymethyldihydropteridine pyrophosphokinase (folK).